The chain runs to 208 residues: Peptide deformylase 3 (208 aa).

Residues Cys120 and His162 each coordinate Fe cation. Glu163 is a catalytic residue. Fe cation is bound at residue His166.

This sequence belongs to the polypeptide deformylase family. Fe(2+) serves as cofactor.

It catalyses the reaction N-terminal N-formyl-L-methionyl-[peptide] + H2O = N-terminal L-methionyl-[peptide] + formate. Its function is as follows. Removes the formyl group from the N-terminal Met of newly synthesized proteins. Requires at least a dipeptide for an efficient rate of reaction. N-terminal L-methionine is a prerequisite for activity but the enzyme has broad specificity at other positions. The polypeptide is Peptide deformylase 3 (Streptomyces coelicolor (strain ATCC BAA-471 / A3(2) / M145)).